The primary structure comprises 716 residues: Penicillin-binding protein 2A (716 aa).

The helical transmembrane segment at 22 to 42 (LNILFLAAFVIFTWIIVELGI) threads the bilayer. Ser397 functions as the Acyl-ester intermediate in the catalytic mechanism. Over residues 689 to 706 (SKQDKEGTQQKNKDKIEE) the composition is skewed to basic and acidic residues. The interval 689 to 716 (SKQDKEGTQQKNKDKIEENAENTTSSDN) is disordered.

The protein belongs to the transpeptidase family.

It localises to the cell membrane. The protein localises to the forespore inner membrane. It catalyses the reaction Preferential cleavage: (Ac)2-L-Lys-D-Ala-|-D-Ala. Also transpeptidation of peptidyl-alanyl moieties that are N-acyl substituents of D-alanine.. It participates in cell wall biogenesis; peptidoglycan biosynthesis. Its function is as follows. Involved in the synthesis of peptidoglycan associated with cell wall elongation, especially following spore germination. Has a partially redundant function with PBP 1 (ponA) or PBP 4 (pbpD) during spore outgrowth. Plays a redundant role with PbpH in determining the rod shape of the cell during vegetative growth and spore outgrowth. The polypeptide is Penicillin-binding protein 2A (Bacillus subtilis (strain 168)).